Here is a 303-residue protein sequence, read N- to C-terminus: MLDVCLLGCGGSMPIPDRNLTAMIVSYQGRKLLIDCGEGTQVSLKILGWKIRNIDVILFTHFHADHIAGLPGLLLTIANSGRLEPITIIGPYGLIKIVMGLKVIAPVLPYSIELVELHGKEKYFQKIGYFNINILSVDHGIPCFAYSIDVQRNRKFDREKALKNKVPLIFWSKLQKGEEIKQRDKLYTPDMVLGYGRRGLKISYCTDSRPSRELVEFVKKSDVFICEGMYGDDEKKHKAISYKHMIFSEAAVIAKEAEVEELWLTHFSPSLIEPQAYIENAKNIFKNTIIGQDRYVKSINFKE.

Zn(2+) contacts are provided by His61, His63, Asp65, His66, His139, Asp207, and His266. Asp65 functions as the Proton acceptor in the catalytic mechanism.

The protein belongs to the RNase Z family. In terms of assembly, homodimer. Requires Zn(2+) as cofactor.

The catalysed reaction is Endonucleolytic cleavage of RNA, removing extra 3' nucleotides from tRNA precursor, generating 3' termini of tRNAs. A 3'-hydroxy group is left at the tRNA terminus and a 5'-phosphoryl group is left at the trailer molecule.. Zinc phosphodiesterase, which displays some tRNA 3'-processing endonuclease activity. Probably involved in tRNA maturation, by removing a 3'-trailer from precursor tRNA. The chain is Ribonuclease Z from Clostridium kluyveri (strain ATCC 8527 / DSM 555 / NBRC 12016 / NCIMB 10680 / K1).